The primary structure comprises 350 residues: 2-oxoglutarate-dependent ethylene/succinate-forming enzyme (350 aa).

Positions 166-286 (GWHHMRVLRF…RFACAYFHEP (121 aa)) constitute a Fe2OG dioxygenase domain. Positions 189 and 268 each coordinate Fe cation.

This sequence belongs to the iron/ascorbate-dependent oxidoreductase family. In terms of assembly, monomer. Fe(2+) serves as cofactor.

The catalysed reaction is 2-oxoglutarate + O2 + 2 H(+) = ethene + 3 CO2 + H2O. It catalyses the reaction L-arginine + 2-oxoglutarate + O2 = guanidine + L-glutamate 5-semialdehyde + succinate + CO2. It participates in alkene biosynthesis; ethylene biosynthesis via 2-oxoglutarate. Its activity is regulated as follows. Activated by catalase. Inhibited by chelating reagents such as EDTA and Tiron (4,5-dihydroxy-1,3-benzene disulphonic acid), and by DTNB (5,5'-dithio-bis-2-nitrobenzoate) and hydrogen peroxide. In terms of biological role, simultaneously catalyzes two reactions, namely formation of ethylene and of succinate from 2-oxoglutarate, with a molar ratio of 2:1. The sequence is that of 2-oxoglutarate-dependent ethylene/succinate-forming enzyme (efe) from Pseudomonas savastanoi pv. phaseolicola (Pseudomonas syringae pv. phaseolicola).